Consider the following 49-residue polypeptide: U3-plectoxin-Pt1a (49 aa).

Cystine bridges form between C2/C16, C9/C30, C15/C41, C32/C39, and C45/C49.

In terms of tissue distribution, expressed by the venom gland.

The protein localises to the secreted. Functionally, potent toxin that may paralyze and/or kill insect pests such as H.virescens (lepidoptera), S.exigua (beet armyworm) and M.sexta (tobacco hornworm). The chain is U3-plectoxin-Pt1a from Plectreurys tristis (Spider).